The primary structure comprises 254 residues: Small ribosomal subunit protein uS2 (254 aa).

Positions 225 to 254 are disordered; it reads ALSERKREKDDAKLKEDEESKKASDKAEIQ. Basic and acidic residues predominate over residues 226 to 254; it reads LSERKREKDDAKLKEDEESKKASDKAEIQ.

This sequence belongs to the universal ribosomal protein uS2 family.

The protein is Small ribosomal subunit protein uS2 of Cytophaga hutchinsonii (strain ATCC 33406 / DSM 1761 / CIP 103989 / NBRC 15051 / NCIMB 9469 / D465).